The sequence spans 242 residues: Small ribosomal subunit protein uS2 (242 aa).

It belongs to the universal ribosomal protein uS2 family.

This is Small ribosomal subunit protein uS2 from Shewanella frigidimarina (strain NCIMB 400).